A 136-amino-acid chain; its full sequence is uncharacterized protein (136 aa).

The tract at residues 1-100 (MQSREPSGWR…PCSGGPDRPE (100 aa)) is disordered. A compositionally biased stretch (basic residues) spans 66 to 75 (RLLRWHHRVP).

This is an uncharacterized protein from Homo sapiens (Human).